The primary structure comprises 627 residues: (+)-3-carene synthase 1, chloroplastic (627 aa).

The transit peptide at 1–36 (MSVISIVPLASKPCLYKSFISSTHEPKALRRPISTV) directs the protein to the chloroplast. Residues D378, D382, and D530 each contribute to the Mg(2+) site. A DDXXD motif motif is present at residues 378–382 (DDMYD).

It belongs to the terpene synthase family. Tpsd subfamily. The cofactor is Mg(2+). It depends on Mn(2+) as a cofactor.

It localises to the plastid. Its subcellular location is the chloroplast. It catalyses the reaction (2E)-geranyl diphosphate = (+)-car-3-ene + diphosphate. It functions in the pathway terpene metabolism; oleoresin biosynthesis. In terms of biological role, terpene synthase (TPS) involved in the biosynthesis of monoterpene natural products included in conifer oleoresin secretions and volatile emissions; these compounds contribute to biotic and abiotic stress defense against herbivores (e.g. insect attack by white pine weevil P.strobi) and pathogens. Catalyzes the conversion of (2E)-geranyl diphosphate (GPP) to (+)-car-3-ene. The polypeptide is (+)-3-carene synthase 1, chloroplastic (Picea sitchensis (Sitka spruce)).